We begin with the raw amino-acid sequence, 493 residues long: Probable malate:quinone oxidoreductase (493 aa).

The protein belongs to the MQO family. FAD serves as cofactor.

The catalysed reaction is (S)-malate + a quinone = a quinol + oxaloacetate. It participates in carbohydrate metabolism; tricarboxylic acid cycle; oxaloacetate from (S)-malate (quinone route): step 1/1. In Mycobacterium marinum (strain ATCC BAA-535 / M), this protein is Probable malate:quinone oxidoreductase.